The following is a 577-amino-acid chain: MFS-type transporter pgmG (577 aa).

The segment at 1–32 is disordered; it reads MSETVTQTETDQRPATARSLGAEEKEAKSDEQ. Residues 21–31 show a composition bias toward basic and acidic residues; the sequence is GAEEKEAKSDE. A run of 8 helical transmembrane segments spans residues 45–65, 84–104, 111–131, 141–161, 174–194, 218–238, 259–279, and 292–312; these read FIVI…NTIV, WLSV…SKIY, WLYL…GAAP, ALAG…LSVN, TGLT…GFAV, PLTV…LFML, LGTI…NFGG, and CFVV…YCIG. N-linked (GlcNAc...) asparagine glycosylation is present at Asn317. Residues 330-350 traverse the membrane as a helical segment; it reads FIILFVQTASVATVFFVPIYF. Asn360 carries N-linked (GlcNAc...) asparagine glycosylation. Helical transmembrane passes span 363–383, 395–415, 426–446, 457–477, and 532–552; these read AIDA…AMIL, MPWY…MYTI, GYMI…FAVA, VATG…LAIA, and ISQV…LAIF.

This sequence belongs to the major facilitator superfamily. TCR/Tet family.

Its subcellular location is the membrane. Its function is as follows. MFS-type transporter; part of the gene cluster that mediates the biosynthesis of pleosporalin A, ascomycone A, as well as a third cryptic naphthoquinone derived pigment, all responsible for the coloration of conidia. Seems not to be involved in pigment biosynthesis although its expression is regulated by the cluster-specific transcription factor pgmR. This Aspergillus terreus (strain NIH 2624 / FGSC A1156) protein is MFS-type transporter pgmG.